The following is a 537-amino-acid chain: CTP synthase (537 aa).

The segment at 1–269 is amidoligase domain; it reads MNQTKYIFVT…DVVALKKLDL (269 aa). A CTP-binding site is contributed by Ser-15. A UTP-binding site is contributed by Ser-15. 16–21 contacts ATP; it reads SLGKGI. Position 56 (Tyr-56) interacts with L-glutamine. Position 73 (Asp-73) interacts with ATP. Asp-73 and Glu-143 together coordinate Mg(2+). CTP-binding positions include 150–152, 190–195, and Lys-226; these read DIE and KTKPTQ. Residues 190 to 195 and Lys-226 each bind UTP; that span reads KTKPTQ. Residues 295 to 537 enclose the Glutamine amidotransferase type-1 domain; the sequence is NIGLVGKYVE…VAAAVNAHKK (243 aa). Residue Gly-357 coordinates L-glutamine. The active-site Nucleophile; for glutamine hydrolysis is the Cys-384. Residues 385–388, Glu-408, and Arg-465 each bind L-glutamine; that span reads LGMQ. Catalysis depends on residues His-510 and Glu-512.

The protein belongs to the CTP synthase family. In terms of assembly, homotetramer.

It carries out the reaction UTP + L-glutamine + ATP + H2O = CTP + L-glutamate + ADP + phosphate + 2 H(+). The catalysed reaction is L-glutamine + H2O = L-glutamate + NH4(+). It catalyses the reaction UTP + NH4(+) + ATP = CTP + ADP + phosphate + 2 H(+). Its pathway is pyrimidine metabolism; CTP biosynthesis via de novo pathway; CTP from UDP: step 2/2. With respect to regulation, allosterically activated by GTP, when glutamine is the substrate; GTP has no effect on the reaction when ammonia is the substrate. The allosteric effector GTP functions by stabilizing the protein conformation that binds the tetrahedral intermediate(s) formed during glutamine hydrolysis. Inhibited by the product CTP, via allosteric rather than competitive inhibition. In terms of biological role, catalyzes the ATP-dependent amination of UTP to CTP with either L-glutamine or ammonia as the source of nitrogen. Regulates intracellular CTP levels through interactions with the four ribonucleotide triphosphates. The protein is CTP synthase of Flavobacterium johnsoniae (strain ATCC 17061 / DSM 2064 / JCM 8514 / BCRC 14874 / CCUG 350202 / NBRC 14942 / NCIMB 11054 / UW101) (Cytophaga johnsonae).